The following is a 3462-amino-acid chain: Extracellular matrix-binding protein EbhA (3462 aa).

Polar residues predominate over residues 1–19 (MVQQSTTVAEAQGNEQKAN). Residues 1-21 (MVQQSTTVAEAQGNEQKANNV) are disordered. FIVAR domains are found at residues 24 to 82 (AMDK…INQA), 150 to 208 (AMGN…VEQA), 276 to 334 (AMTQ…ITAA), 402 to 460 (AMTQ…IQQA), 528 to 586 (AMTN…VEQA), 654 to 712 (AMTQ…VAQA), 780 to 838 (AMGT…VTQA), 906 to 964 (AMSN…ITRA), 1032 to 1093 (AMDQ…ITNE), 1158 to 1216 (AMEL…VNGA), 1284 to 1342 (AMGN…VEQA), 1410 to 1467 (AMHG…INQA), 1535 to 1593 (LMDA…VSSA), 1661 to 1719 (AMEA…VEQL), 1787 to 1845 (AMQA…VEQL), 1913 to 1971 (AMET…VDQV), 2039 to 2093 (SMDQ…VDQA), 2161 to 2220 (AMDQ…VIKL), and 2415 to 2471 (AMET…INGA). Residues 3267–3289 (VIKNAIGVVGISGLLASFWFFIA) form a helical membrane-spanning segment. Positions 3365 to 3462 (RRKEDEEDVE…KKKKAKKNKK (98 aa)) are disordered. Basic and acidic residues-rich tracts occupy residues 3380–3390 (TDEKVLKDNEH) and 3429–3439 (QKDNQSKDKKS). A compositionally biased stretch (basic residues) spans 3444–3462 (TSKKVAAKKKKKKAKKNKK).

It is found in the cell membrane. The sequence is that of Extracellular matrix-binding protein EbhA (ebhA) from Staphylococcus aureus (strain Newman).